Consider the following 430-residue polypeptide: Dihydroorotase (430 aa).

Zn(2+) is bound by residues His61 and His63. Substrate-binding positions include 63-65 (HLR) and Asn95. Asp153, His180, and His233 together coordinate Zn(2+). Asn279 contacts substrate. Asp306 provides a ligand contact to Zn(2+). Asp306 is a catalytic residue. Substrate contacts are provided by residues His310 and 324–325 (FG).

It belongs to the metallo-dependent hydrolases superfamily. DHOase family. Class I DHOase subfamily. Requires Zn(2+) as cofactor.

The catalysed reaction is (S)-dihydroorotate + H2O = N-carbamoyl-L-aspartate + H(+). It functions in the pathway pyrimidine metabolism; UMP biosynthesis via de novo pathway; (S)-dihydroorotate from bicarbonate: step 3/3. Its function is as follows. Catalyzes the reversible cyclization of carbamoyl aspartate to dihydroorotate. This Lactiplantibacillus plantarum (strain ATCC BAA-793 / NCIMB 8826 / WCFS1) (Lactobacillus plantarum) protein is Dihydroorotase.